The chain runs to 99 residues: UPF0235 protein Neut_2146 (99 aa).

This sequence belongs to the UPF0235 family.

In Nitrosomonas eutropha (strain DSM 101675 / C91 / Nm57), this protein is UPF0235 protein Neut_2146.